The sequence spans 529 residues: UDP-glucuronosyltransferase 2B18 (529 aa).

The first 21 residues, 1–21, serve as a signal peptide directing secretion; sequence MSVKWTSVILLIQLSFYFSSG. Residues N67 and N68 are each glycosylated (N-linked (GlcNAc...) asparagine). The helical transmembrane segment at 493–513 threads the bilayer; it reads VIGFLLACVATVIFIIMKCCL.

Belongs to the UDP-glycosyltransferase family. As to expression, expressed in liver, prostate, kidney, testis, adrenal, bile duct, bladder, colon, small intestine, cerebellum and pancreas.

Its subcellular location is the microsome membrane. The protein localises to the endoplasmic reticulum membrane. It catalyses the reaction glucuronate acceptor + UDP-alpha-D-glucuronate = acceptor beta-D-glucuronoside + UDP + H(+). Its function is as follows. UDPGT is of major importance in the conjugation and subsequent elimination of potentially toxic xenobiotics and endogenous compounds. This isozyme displays activity toward 3-hydroxyandrogens. It is principally active on C19 steroids having a hydroxyl group at position 3-alpha of the steroid molecule and also active on planar phenols and bile acids. This is UDP-glucuronosyltransferase 2B18 (UGT2B18) from Macaca fascicularis (Crab-eating macaque).